Consider the following 212-residue polypeptide: Ribosomal RNA small subunit methyltransferase G (212 aa).

Residues Gly80, Leu85, 131–132 (AE), and Arg146 each bind S-adenosyl-L-methionine.

Belongs to the methyltransferase superfamily. RNA methyltransferase RsmG family.

It localises to the cytoplasm. The enzyme catalyses guanosine(527) in 16S rRNA + S-adenosyl-L-methionine = N(7)-methylguanosine(527) in 16S rRNA + S-adenosyl-L-homocysteine. Its function is as follows. Specifically methylates the N7 position of guanine in position 527 of 16S rRNA. This is Ribosomal RNA small subunit methyltransferase G from Xanthomonas euvesicatoria pv. vesicatoria (strain 85-10) (Xanthomonas campestris pv. vesicatoria).